Consider the following 167-residue polypeptide: Lipoprotein signal peptidase (167 aa).

4 helical membrane-spanning segments follow: residues 8-28 (TFLT…VVLL), 46-66 (WGHF…FGLF), 70-90 (KIPL…FLGI), and 101-121 (IALT…LFHG). Active-site residues include D125 and D143. The helical transmembrane segment at 139-159 (FNLADAFISLGTLLLVGHLYF) threads the bilayer.

The protein belongs to the peptidase A8 family.

It is found in the cell inner membrane. The enzyme catalyses Release of signal peptides from bacterial membrane prolipoproteins. Hydrolyzes -Xaa-Yaa-Zaa-|-(S,diacylglyceryl)Cys-, in which Xaa is hydrophobic (preferably Leu), and Yaa (Ala or Ser) and Zaa (Gly or Ala) have small, neutral side chains.. Its pathway is protein modification; lipoprotein biosynthesis (signal peptide cleavage). Its function is as follows. This protein specifically catalyzes the removal of signal peptides from prolipoproteins. This chain is Lipoprotein signal peptidase, found in Chlamydia muridarum (strain MoPn / Nigg).